Reading from the N-terminus, the 152-residue chain is uncharacterized protein (152 aa).

This is an uncharacterized protein from Mycobacterium tuberculosis (strain ATCC 25618 / H37Rv).